Reading from the N-terminus, the 276-residue chain is Shikimate dehydrogenase (NADP(+)) (276 aa).

Shikimate is bound by residues 15 to 17 (SKS) and Thr-62. Lys-66 (proton acceptor) is an active-site residue. Glu-78 contacts NADP(+). Shikimate contacts are provided by Asn-87 and Asp-103. Residues 127–131 (GAGGV), 150–155 (NRTHIK), and Met-214 each bind NADP(+). Residue Tyr-216 participates in shikimate binding. Gly-239 is a binding site for NADP(+).

The protein belongs to the shikimate dehydrogenase family. Homodimer.

The catalysed reaction is shikimate + NADP(+) = 3-dehydroshikimate + NADPH + H(+). It participates in metabolic intermediate biosynthesis; chorismate biosynthesis; chorismate from D-erythrose 4-phosphate and phosphoenolpyruvate: step 4/7. Functionally, involved in the biosynthesis of the chorismate, which leads to the biosynthesis of aromatic amino acids. Catalyzes the reversible NADPH linked reduction of 3-dehydroshikimate (DHSA) to yield shikimate (SA). The chain is Shikimate dehydrogenase (NADP(+)) from Haemophilus ducreyi (strain 35000HP / ATCC 700724).